A 496-amino-acid polypeptide reads, in one-letter code: SRCTHLENRDFVTGTQGTTRVTLVLELGGCVTITAEGKPSVDVWLDAIYQESPAKTREYCLHAKLSETKVAARCPTMGPAVLTEEHQIGTVCKRDQSDRGWGNHCGLFGKGSIVACVKAACEAKKKATGYVYDANKIVYTVKVEPHTGDYVAANETHKGRKTTTFTVSSEKTILTLGEYGDVSLLCRVASGVNLAQTIILELDKTAEHLPTAWQVHRDWFNDLALPWKHDGNPHWNNAERLVEFGVPHAVKMDVYNLGDQTGVLLKALAGVPVAHIEGNKYHLKSGHVTCEVGLENLKMKGLTYTMCDKSKFTWKRTPTDSGHDTVVMEVTFSGSKPCRIPVRAVAHGSPDVNVAMLITPNPTIENDGGGFIEMQLPPGDNIIYVGELSHQWFQTGSSIGRVFQTTRKGIERLTVIGEHAWDFGSAGGFFSSIGKAVHTVLGGAFNSIFGGVGFLPKLLMGVALAWLGLNTRNPTMSMSFLLAGGLVLAMTLGVGA.

Residues 1–447 are Extracellular-facing; sequence SRCTHLENRD…HTVLGGAFNS (447 aa). Cystine bridges form between Cys3/Cys30, Cys60/Cys116, Cys60/Cys121, Cys74/Cys105, Cys92/Cys116, and Cys92/Cys121. The segment at 98-111 is fusion peptide; the sequence is DRGWGNHCGLFGKG. Asn154 carries N-linked (GlcNAc...) asparagine; by host glycosylation. Cystine bridges form between Cys186–Cys290 and Cys307–Cys338. The helical transmembrane segment at 448–468 threads the bilayer; it reads IFGGVGFLPKLLMGVALAWLG. Residues 469 to 479 lie on the Cytoplasmic side of the membrane; it reads LNTRNPTMSMS. A helical membrane pass occupies residues 480–496; the sequence is FLLAGGLVLAMTLGVGA.

Homodimer; in the endoplasmic reticulum and Golgi. In terms of processing, N-glycosylated.

It localises to the virion membrane. Its subcellular location is the host endoplasmic reticulum membrane. Binds to host cell surface receptor and mediates fusion between viral and cellular membranes. Envelope protein is synthesized in the endoplasmic reticulum in the form of heterodimer with protein prM. They play a role in virion budding in the ER, and the newly formed immature particle is covered with 60 spikes composed of heterodimer between precursor prM and envelope protein E. The virion is transported to the Golgi apparatus where the low pH causes dissociation of PrM-E heterodimers and formation of E homodimers. prM-E cleavage is ineficient, and many virions are only partially matured. These uncleaved prM would play a role in immune evasion. The sequence is that of Genome polyprotein from Louping ill virus (strain Negishi 3248/49/P10) (Li).